A 317-amino-acid polypeptide reads, in one-letter code: Neuroguidin-A (317 aa).

2 disordered regions span residues 125 to 170 (ENDP…SKVK) and 280 to 317 (SALTGGEGRAEDMVPSMKKSKKGPKKSKKKKGFSRRRH). Residues 146 to 157 (DERESDSGEEGA) show a composition bias toward acidic residues. The span at 297 to 317 (KKSKKGPKKSKKKKGFSRRRH) shows a compositional bias: basic residues.

The protein belongs to the SAS10 family. Part of the small subunit (SSU) processome, composed of more than 70 proteins and the RNA chaperone small nucleolar RNA (snoRNA) U3.

The protein localises to the nucleus. Its subcellular location is the nucleolus. It localises to the chromosome. The protein resides in the centromere. It is found in the cytoplasm. The protein localises to the cell projection. Its subcellular location is the axon. It localises to the dendrite. The protein resides in the filopodium. In terms of biological role, part of the small subunit (SSU) processome, first precursor of the small eukaryotic ribosomal subunit. During the assembly of the SSU processome in the nucleolus, many ribosome biogenesis factors, an RNA chaperone and ribosomal proteins associate with the nascent pre-rRNA and work in concert to generate RNA folding, modifications, rearrangements and cleavage as well as targeted degradation of pre-ribosomal RNA by the RNA exosome. Its dissociation from the complex determines the transition from state pre-A1 to state pre-A1*. May inhibit mRNA translation. In Xenopus laevis (African clawed frog), this protein is Neuroguidin-A (ngdn-a).